The following is a 968-amino-acid chain: Protein translocase subunit SecA (968 aa).

Residues Gln99, 117-121 (GEGKT), and Asp631 contribute to the ATP site.

It belongs to the SecA family. As to quaternary structure, monomer and homodimer. Part of the essential Sec protein translocation apparatus which comprises SecA, SecYEG and auxiliary proteins SecDF. Other proteins may also be involved.

The protein resides in the cell inner membrane. The protein localises to the cytoplasm. It carries out the reaction ATP + H2O + cellular proteinSide 1 = ADP + phosphate + cellular proteinSide 2.. Part of the Sec protein translocase complex. Interacts with the SecYEG preprotein conducting channel. Has a central role in coupling the hydrolysis of ATP to the transfer of proteins into and across the cell membrane, serving as an ATP-driven molecular motor driving the stepwise translocation of polypeptide chains across the membrane. The chain is Protein translocase subunit SecA from Chlamydia muridarum (strain MoPn / Nigg).